Consider the following 990-residue polypeptide: Membrane alanyl aminopeptidase (990 aa).

Positions 1-15 are cleaved as a signal peptide; sequence FTIFLGVALLQGVLT. The propeptide at 16–35 is activation peptide; the sequence is LSPIPVPEEEWAEFSRMLRD. N-linked (GlcNAc...) asparagine glycosylation occurs at Asn-295. 321 to 325 is a binding site for substrate; it reads GAMEN. A Zn(2+)-binding site is contributed by His-357. Catalysis depends on Glu-358, which acts as the Proton acceptor. Zn(2+)-binding residues include His-361 and Glu-380. 3 N-linked (GlcNAc...) asparagine glycosylation sites follow: Asn-609, Asn-623, and Asn-752. Residue Gly-968 is the site of GPI-anchor amidated glycine attachment. The propeptide at 969-990 is removed in mature form; the sequence is SGNIAALSVVSLLVTLAINMVA.

Belongs to the peptidase M1 family. Requires Zn(2+) as cofactor. In terms of tissue distribution, midgut brush-border membrane.

It localises to the cell membrane. Functionally, binds to the B.thuringiensis toxin, CryIA(C). In Manduca sexta (Tobacco hawkmoth), this protein is Membrane alanyl aminopeptidase.